The sequence spans 264 residues: Ribosomal RNA small subunit methyltransferase A (264 aa).

Residues Asn12, Leu14, Gly40, Glu61, Asp86, and Asn105 each coordinate S-adenosyl-L-methionine.

The protein belongs to the class I-like SAM-binding methyltransferase superfamily. rRNA adenine N(6)-methyltransferase family. RsmA subfamily.

The protein localises to the cytoplasm. The enzyme catalyses adenosine(1518)/adenosine(1519) in 16S rRNA + 4 S-adenosyl-L-methionine = N(6)-dimethyladenosine(1518)/N(6)-dimethyladenosine(1519) in 16S rRNA + 4 S-adenosyl-L-homocysteine + 4 H(+). Its function is as follows. Specifically dimethylates two adjacent adenosines (A1518 and A1519) in the loop of a conserved hairpin near the 3'-end of 16S rRNA in the 30S particle. May play a critical role in biogenesis of 30S subunits. This Fusobacterium nucleatum subsp. nucleatum (strain ATCC 25586 / DSM 15643 / BCRC 10681 / CIP 101130 / JCM 8532 / KCTC 2640 / LMG 13131 / VPI 4355) protein is Ribosomal RNA small subunit methyltransferase A.